Consider the following 241-residue polypeptide: MDDQEPVYKRILLKLSGEALAGNQGFGIDPQVISGIAEEIREVIGLGVQVAVVIGGGNIFRGMAAAAGGMDRAGADYMGMLATIMNSLALQDALEQAGVPTRVQTAIEMREVAEPYIRRRAIRHLEKKRVVIFGGGTGNPYFTTDTAASLRAMEIDADVILKATKVDGVYSADPCKDKNAVKFDNLKYLDVLKKGLKVMDATATSLCMDNDLPIVVFQLSRPGNIKKVVLGEAIGTIVKGE.

K14–G17 serves as a coordination point for ATP. Residues G22–G27 are involved in allosteric activation by GTP. Residue G56 coordinates UMP. Residues G57 and R61 each coordinate ATP. Residues D76 and T137–T144 contribute to the UMP site. The ATP site is built by T164, Y170, and D173.

The protein belongs to the UMP kinase family. Homohexamer.

Its subcellular location is the cytoplasm. The enzyme catalyses UMP + ATP = UDP + ADP. The protein operates within pyrimidine metabolism; CTP biosynthesis via de novo pathway; UDP from UMP (UMPK route): step 1/1. Its activity is regulated as follows. Allosterically activated by GTP. Inhibited by UTP. Functionally, catalyzes the reversible phosphorylation of UMP to UDP. The protein is Uridylate kinase of Syntrophotalea carbinolica (strain DSM 2380 / NBRC 103641 / GraBd1) (Pelobacter carbinolicus).